The chain runs to 396 residues: Chaperone protein DnaJ 1 (396 aa).

In terms of domain architecture, J spans 10–75 (DYYKVLGVPK…KKRKEYDEAR (66 aa)). A compositionally biased stretch (gly residues) spans 127–137 (LFNRGGAGPGT). A disordered region spans residues 127–149 (LFNRGGAGPGTGTRTQPRRGQDI). Residues 163 to 241 (GATVPLRMSS…CKGSGRAKSS (79 aa)) form a CR-type zinc finger. Zn(2+) is bound by residues C176, C179, C192, C195, C215, C218, C229, and C232. 4 CXXCXGXG motif repeats span residues 176–183 (CKACSGTG), 192–199 (CPTCVGTG), 215–222 (CPDCKGRG), and 229–236 (CEICKGSG).

This sequence belongs to the DnaJ family. Homodimer. Zn(2+) serves as cofactor.

The protein localises to the cytoplasm. Functionally, participates actively in the response to hyperosmotic and heat shock by preventing the aggregation of stress-denatured proteins and by disaggregating proteins, also in an autonomous, DnaK-independent fashion. Unfolded proteins bind initially to DnaJ; upon interaction with the DnaJ-bound protein, DnaK hydrolyzes its bound ATP, resulting in the formation of a stable complex. GrpE releases ADP from DnaK; ATP binding to DnaK triggers the release of the substrate protein, thus completing the reaction cycle. Several rounds of ATP-dependent interactions between DnaJ, DnaK and GrpE are required for fully efficient folding. Also involved, together with DnaK and GrpE, in the DNA replication of plasmids through activation of initiation proteins. This is Chaperone protein DnaJ 1 from Streptomyces avermitilis (strain ATCC 31267 / DSM 46492 / JCM 5070 / NBRC 14893 / NCIMB 12804 / NRRL 8165 / MA-4680).